The chain runs to 318 residues: Methionyl-tRNA formyltransferase (318 aa).

Residue 112-115 (SILP) participates in (6S)-5,6,7,8-tetrahydrofolate binding.

Belongs to the Fmt family.

It catalyses the reaction L-methionyl-tRNA(fMet) + (6R)-10-formyltetrahydrofolate = N-formyl-L-methionyl-tRNA(fMet) + (6S)-5,6,7,8-tetrahydrofolate + H(+). Functionally, attaches a formyl group to the free amino group of methionyl-tRNA(fMet). The formyl group appears to play a dual role in the initiator identity of N-formylmethionyl-tRNA by promoting its recognition by IF2 and preventing the misappropriation of this tRNA by the elongation apparatus. The protein is Methionyl-tRNA formyltransferase of Shewanella putrefaciens (strain CN-32 / ATCC BAA-453).